We begin with the raw amino-acid sequence, 692 residues long: E3 ubiquitin-protein ligase MARCHF7 (692 aa).

At methionine 1 the chain carries N-acetylmethionine. Disordered regions lie at residues 1-165 (MESK…SHRS), 201-280 (STNH…GRRT), 296-343 (FFSR…RASE), 360-425 (LSQN…HLFR), 440-474 (SLGA…RNTG), and 512-532 (SSAD…PEKL). Residues 37–48 (YHSRDSSFRLDS) show a composition bias toward basic and acidic residues. Polar residues-rich tracts occupy residues 61–83 (PYQS…SQNQ) and 95–132 (SCTN…SSMV). A compositionally biased stretch (basic and acidic residues) spans 140-153 (LMRERRDLERRRDS). The span at 201–214 (STNHQLPSEHQTVP) shows a compositional bias: polar residues. Residues 215-233 (SSRDSSRSSFRSHFSPRQS) show a composition bias toward low complexity. Polar residues predominate over residues 235–272 (SFRNSSHPAFSYLSSRNETPTISSSERAGSSQRPFQES). Positions 296–305 (FFSRRSSQDS) are enriched in low complexity. Positions 306 to 336 (LNTRSLSSENYISPRTLTSQSRNNGASSSEV) are enriched in polar residues. 2 positions are modified to phosphoserine: serine 318 and serine 389. A compositionally biased stretch (low complexity) spans 450-462 (ASGASGNASASGS). The segment covering 516–532 (GKSEKAKSAPSRDPEKL) has biased composition (basic and acidic residues). An RING-CH-type zinc finger spans residues 545–615 (DEEEEGDLCR…ELCKEKLQLN (71 aa)). 8 residues coordinate Zn(2+): cysteine 553, cysteine 556, cysteine 571, cysteine 573, histidine 581, cysteine 584, cysteine 605, and cysteine 608. Position 687 is a phosphothreonine (threonine 687). A Phosphoserine modification is found at serine 688.

It is found in the cytoplasm. The enzyme catalyses S-ubiquitinyl-[E2 ubiquitin-conjugating enzyme]-L-cysteine + [acceptor protein]-L-lysine = [E2 ubiquitin-conjugating enzyme]-L-cysteine + N(6)-ubiquitinyl-[acceptor protein]-L-lysine.. Its pathway is protein modification; protein ubiquitination. Functionally, E3 ubiquitin-protein ligase which may specifically enhance the E2 activity of HIP2. E3 ubiquitin ligases accept ubiquitin from an E2 ubiquitin-conjugating enzyme in the form of a thioester and then directly transfer the ubiquitin to targeted substrates. May be involved in T-cell proliferation by regulating LIF secretion. May play a role in lysosome homeostasis. Promotes 'Lys-6', 'Lys-11' and 'Lys-63'-linked mixed polyubiquitination on ATG14 leading to the inhibition of autophagy by impairing the interaction between ATG14 and STX7. Participates in the dopamine-mediated negative regulation of the NLRP3 inflammasome by promoting its uibiquitination and subsequent degradation. The polypeptide is E3 ubiquitin-protein ligase MARCHF7 (Marchf7) (Rattus norvegicus (Rat)).